A 192-amino-acid chain; its full sequence is Transcription antitermination protein NusB (192 aa).

This sequence belongs to the NusB family.

Involved in transcription antitermination. Required for transcription of ribosomal RNA (rRNA) genes. Binds specifically to the boxA antiterminator sequence of the ribosomal RNA (rrn) operons. This is Transcription antitermination protein NusB from Lactococcus lactis subsp. lactis (strain IL1403) (Streptococcus lactis).